The sequence spans 433 residues: Serine hydroxymethyltransferase (433 aa).

Position 121–123 (Ala-121–Val-123) interacts with (6S)-5,6,7,8-tetrahydrofolate. The residue at position 227 (Lys-227) is an N6-(pyridoxal phosphate)lysine. Glu-243 is a (6S)-5,6,7,8-tetrahydrofolate binding site.

It belongs to the SHMT family. As to quaternary structure, homodimer. Pyridoxal 5'-phosphate serves as cofactor.

Its subcellular location is the cytoplasm. The protein operates within amino-acid biosynthesis; glycine biosynthesis; glycine from L-serine: step 1/1. Functionally, catalyzes the reversible interconversion of serine and glycine with a modified folate serving as the one-carbon carrier. Also exhibits a pteridine-independent aldolase activity toward beta-hydroxyamino acids, producing glycine and aldehydes, via a retro-aldol mechanism. The sequence is that of Serine hydroxymethyltransferase from Saccharolobus islandicus (strain Y.G.57.14 / Yellowstone #1) (Sulfolobus islandicus).